A 177-amino-acid polypeptide reads, in one-letter code: Large ribosomal subunit protein uL6 (177 aa).

The protein belongs to the universal ribosomal protein uL6 family. As to quaternary structure, part of the 50S ribosomal subunit.

Functionally, this protein binds to the 23S rRNA, and is important in its secondary structure. It is located near the subunit interface in the base of the L7/L12 stalk, and near the tRNA binding site of the peptidyltransferase center. The polypeptide is Large ribosomal subunit protein uL6 (Pasteurella multocida (strain Pm70)).